The sequence spans 1089 residues: Carbamoyl phosphate synthase large chain (1089 aa).

The segment at 1–399 (MPKRTDIKSI…SIQKALCSLE (399 aa)) is carboxyphosphate synthetic domain. ATP contacts are provided by Arg-127, Arg-167, Gly-173, Gly-174, Glu-206, Leu-208, Glu-213, Gly-239, Val-240, His-241, Gln-283, and Glu-297. Positions 131-326 (KECMKKIGMD…IAKVATLLAV (196 aa)) constitute an ATP-grasp 1 domain. Positions 283, 297, and 299 each coordinate Mg(2+). Positions 283, 297, and 299 each coordinate Mn(2+). Residues 400 to 553 (RSLSGFDRVK…NVSELTQSKN (154 aa)) form an oligomerization domain region. The carbamoyl phosphate synthetic domain stretch occupies residues 554 to 951 (DAKDKKEKKV…SYAKSQIASF (398 aa)). Positions 680–871 (AEFITKLGIN…LAKVATRVMW (192 aa)) constitute an ATP-grasp 2 domain. 10 residues coordinate ATP: Arg-716, Gln-755, Leu-757, Glu-762, Gly-787, Ile-788, His-789, Ser-790, Gln-830, and Glu-842. 3 residues coordinate Mg(2+): Gln-830, Glu-842, and Asn-844. Mn(2+) contacts are provided by Gln-830, Glu-842, and Asn-844. Positions 952–1089 (NHLPEQGVVF…VKSLQEWLKS (138 aa)) constitute an MGS-like domain. Residues 952–1089 (NHLPEQGVVF…VKSLQEWLKS (138 aa)) are allosteric domain.

This sequence belongs to the CarB family. In terms of assembly, composed of two chains; the small (or glutamine) chain promotes the hydrolysis of glutamine to ammonia, which is used by the large (or ammonia) chain to synthesize carbamoyl phosphate. Tetramer of heterodimers (alpha,beta)4. It depends on Mg(2+) as a cofactor. Requires Mn(2+) as cofactor.

It catalyses the reaction hydrogencarbonate + L-glutamine + 2 ATP + H2O = carbamoyl phosphate + L-glutamate + 2 ADP + phosphate + 2 H(+). The enzyme catalyses hydrogencarbonate + NH4(+) + 2 ATP = carbamoyl phosphate + 2 ADP + phosphate + 2 H(+). It participates in amino-acid biosynthesis; L-arginine biosynthesis; carbamoyl phosphate from bicarbonate: step 1/1. The protein operates within pyrimidine metabolism; UMP biosynthesis via de novo pathway; (S)-dihydroorotate from bicarbonate: step 1/3. Its function is as follows. Large subunit of the glutamine-dependent carbamoyl phosphate synthetase (CPSase). CPSase catalyzes the formation of carbamoyl phosphate from the ammonia moiety of glutamine, carbonate, and phosphate donated by ATP, constituting the first step of 2 biosynthetic pathways, one leading to arginine and/or urea and the other to pyrimidine nucleotides. The large subunit (synthetase) binds the substrates ammonia (free or transferred from glutamine from the small subunit), hydrogencarbonate and ATP and carries out an ATP-coupled ligase reaction, activating hydrogencarbonate by forming carboxy phosphate which reacts with ammonia to form carbamoyl phosphate. In Campylobacter jejuni subsp. jejuni serotype O:2 (strain ATCC 700819 / NCTC 11168), this protein is Carbamoyl phosphate synthase large chain.